Consider the following 1976-residue polypeptide: Myosin-10 (1976 aa).

At Arg18 the chain carries Omega-N-methylarginine. A Myosin N-terminal SH3-like domain is found at 31-81 (TAKKLVWIPSERHGFEAASIKEERGDEVMVELAENGKKAMVNKDDIQKMNP). The Myosin motor domain occupies 85–783 (SKVEDMAELT…VLAHLEEERD (699 aa)). 178 to 185 (GESGAGKT) is a binding site for ATP. Lys442 bears the N6-acetyllysine mark. Residues 661-683 (LTKLMATLRNTNPNFVRCIIPNH) form an actin-binding region. The IQ domain occupies 786-815 (ITDIIIFFQAVCRGYLARKAFAKKQQQLSA). Residues 845-1976 (LQVTRQEEEL…VNETQPPQSE (1132 aa)) are a coiled coil. The segment at 1125-1175 (EDFESEKASRNKAEKQKRDLSEELEALKTELEDTLDTTAAQQELRTKREQE) is disordered. A compositionally biased stretch (basic and acidic residues) spans 1129 to 1155 (SEKASRNKAEKQKRDLSEELEALKTEL). Ser1145 is modified (phosphoserine). Residues Lys1241, Lys1301, and Lys1645 each carry the N6-acetyllysine modification. Disordered regions lie at residues 1697-1718 (ASSE…DEIA) and 1874-1976 (KANA…PQSE). Residues 1698–1708 (SSERARRHAEQ) show a composition bias toward basic and acidic residues. Arg1930 is modified (omega-N-methylarginine). A phosphoserine mark is found at Ser1935, Ser1937, Ser1938, and Ser1939. An Omega-N-methylarginine modification is found at Arg1940. A phosphoserine mark is found at Ser1952 and Ser1956. Thr1960 bears the Phosphothreonine mark. The span at 1967–1976 (VNETQPPQSE) shows a compositional bias: polar residues. Ser1975 carries the phosphoserine modification.

It belongs to the TRAFAC class myosin-kinesin ATPase superfamily. Myosin family. In terms of assembly, myosin is a hexameric protein that consists of 2 heavy chain subunits (MHC), 2 alkali light chain subunits (MLC) and 2 regulatory light chain subunits (MLC-2). Interacts with PLEKHG6. Interacts with ECPAS. Interacts with KIF26B. Interacts with LARP6. Interacts with MCC. Interacts with CFAP95. Phosphorylated by ABL2.

Its subcellular location is the cell projection. It is found in the lamellipodium. In terms of biological role, involved with LARP6 in the stabilization of type I collagen mRNAs for CO1A1 and CO1A2. During cell spreading, plays an important role in cytoskeleton reorganization, focal contacts formation (in the central part but not the margins of spreading cells), and lamellipodial extension; this function is mechanically antagonized by MYH9. Cellular myosin that appears to play a role in cytokinesis, cell shape, and specialized functions such as secretion and capping. In Rattus norvegicus (Rat), this protein is Myosin-10 (Myh10).